We begin with the raw amino-acid sequence, 380 residues long: Actin-like protein arp10 (380 aa).

The protein belongs to the actin family. ARP10 subfamily.

Its subcellular location is the cytoplasm. The protein localises to the cytoskeleton. The protein resides in the nucleus. The chain is Actin-like protein arp10 (arp10) from Schizosaccharomyces pombe (strain 972 / ATCC 24843) (Fission yeast).